The chain runs to 537 residues: Bifunctional NAD(P)H-hydrate repair enzyme Nnr (537 aa).

The NAD(P)H-hydrate epimerase stretch occupies residues 1–227 (MLGRPVFGLG…PPEAEVYVGP (227 aa)). The YjeF N-terminal domain maps to 13 to 223 (ITSVDVAVID…SIGAPPEAEV (211 aa)). Positions 65 to 69 (GNGGD) are NADPHX 1; for epimerase activity. Residues N66 and D135 each contribute to the K(+) site. The interval 139–145 (GTGLRGA) is NADPHX 1; for epimerase activity. The (6S)-NADPHX site is built by Y150 and D168. S171 lines the K(+) pocket. The YjeF C-terminal domain maps to 226–508 (GPGDVAYRVR…EKIPEALNNP (283 aa)). Positions 227–537 (PGDVAYRVRP…WQPPVGRSES (311 aa)) are ADP-dependent (S)-NAD(P)H-hydrate dehydratase. Residue G329 participates in (6S)-NADPHX binding. The NADPHX 2; for dehydratase activity stretch occupies residues 381–387 (HQREFQI). ADP is bound by residues 421–425 (KGPID) and 440–449 (VPAMSVGGTG). A (6S)-NADPHX-binding site is contributed by D450.

In the N-terminal section; belongs to the NnrE/AIBP family. It in the C-terminal section; belongs to the NnrD/CARKD family. The cofactor is K(+).

It carries out the reaction (6S)-NADHX + ADP = AMP + phosphate + NADH + H(+). The enzyme catalyses (6S)-NADPHX + ADP = AMP + phosphate + NADPH + H(+). It catalyses the reaction (6R)-NADHX = (6S)-NADHX. The catalysed reaction is (6R)-NADPHX = (6S)-NADPHX. Its function is as follows. Bifunctional enzyme that catalyzes the epimerization of the S- and R-forms of NAD(P)HX and the dehydration of the S-form of NAD(P)HX at the expense of ADP, which is converted to AMP. This allows the repair of both epimers of NAD(P)HX, a damaged form of NAD(P)H that is a result of enzymatic or heat-dependent hydration. In Hyperthermus butylicus (strain DSM 5456 / JCM 9403 / PLM1-5), this protein is Bifunctional NAD(P)H-hydrate repair enzyme Nnr (nnr).